Consider the following 414-residue polypeptide: Serine--tRNA ligase (414 aa).

Residue 230 to 232 (TSE) coordinates L-serine. An ATP-binding site is contributed by 261–263 (RQE). Position 284 (E284) interacts with L-serine. 348-351 (EISS) lines the ATP pocket. S382 serves as a coordination point for L-serine.

This sequence belongs to the class-II aminoacyl-tRNA synthetase family. Type-1 seryl-tRNA synthetase subfamily. In terms of assembly, homodimer. The tRNA molecule binds across the dimer.

The protein localises to the cytoplasm. The catalysed reaction is tRNA(Ser) + L-serine + ATP = L-seryl-tRNA(Ser) + AMP + diphosphate + H(+). The enzyme catalyses tRNA(Sec) + L-serine + ATP = L-seryl-tRNA(Sec) + AMP + diphosphate + H(+). The protein operates within aminoacyl-tRNA biosynthesis; selenocysteinyl-tRNA(Sec) biosynthesis; L-seryl-tRNA(Sec) from L-serine and tRNA(Sec): step 1/1. In terms of biological role, catalyzes the attachment of serine to tRNA(Ser). Is also able to aminoacylate tRNA(Sec) with serine, to form the misacylated tRNA L-seryl-tRNA(Sec), which will be further converted into selenocysteinyl-tRNA(Sec). In Campylobacter concisus (strain 13826), this protein is Serine--tRNA ligase.